Consider the following 103-residue polypeptide: Pyrimidine/purine nucleoside phosphorylase (103 aa).

The protein belongs to the nucleoside phosphorylase PpnP family.

It catalyses the reaction a purine D-ribonucleoside + phosphate = a purine nucleobase + alpha-D-ribose 1-phosphate. The enzyme catalyses adenosine + phosphate = alpha-D-ribose 1-phosphate + adenine. It carries out the reaction cytidine + phosphate = cytosine + alpha-D-ribose 1-phosphate. The catalysed reaction is guanosine + phosphate = alpha-D-ribose 1-phosphate + guanine. It catalyses the reaction inosine + phosphate = alpha-D-ribose 1-phosphate + hypoxanthine. The enzyme catalyses thymidine + phosphate = 2-deoxy-alpha-D-ribose 1-phosphate + thymine. It carries out the reaction uridine + phosphate = alpha-D-ribose 1-phosphate + uracil. The catalysed reaction is xanthosine + phosphate = alpha-D-ribose 1-phosphate + xanthine. Its function is as follows. Catalyzes the phosphorolysis of diverse nucleosides, yielding D-ribose 1-phosphate and the respective free bases. Can use uridine, adenosine, guanosine, cytidine, thymidine, inosine and xanthosine as substrates. Also catalyzes the reverse reactions. The chain is Pyrimidine/purine nucleoside phosphorylase from Shewanella oneidensis (strain ATCC 700550 / JCM 31522 / CIP 106686 / LMG 19005 / NCIMB 14063 / MR-1).